The sequence spans 92 residues: Small ribosomal subunit protein uS19 (92 aa).

It belongs to the universal ribosomal protein uS19 family.

In terms of biological role, protein S19 forms a complex with S13 that binds strongly to the 16S ribosomal RNA. The chain is Small ribosomal subunit protein uS19 from Psychromonas ingrahamii (strain DSM 17664 / CCUG 51855 / 37).